Reading from the N-terminus, the 205-residue chain is NAD(P)H dehydrogenase (quinone) (205 aa).

The region spanning 3–194 is the Flavodoxin-like domain; sequence VLVVYYSMYG…AAARYQGKHV (192 aa). FMN is bound by residues 9-14 and 82-84; these read SMYGHI and TRF. Tyr-11 contributes to the NAD(+) binding site. Position 102 (Trp-102) interacts with substrate. His-138 is a binding site for FMN.

This sequence belongs to the WrbA family. The cofactor is FMN.

The catalysed reaction is a quinone + NADH + H(+) = a quinol + NAD(+). The enzyme catalyses a quinone + NADPH + H(+) = a quinol + NADP(+). This chain is NAD(P)H dehydrogenase (quinone), found in Geotalea daltonii (strain DSM 22248 / JCM 15807 / FRC-32) (Geobacter daltonii).